Consider the following 387-residue polypeptide: Small ribosomal subunit protein mS31 (387 aa).

A mitochondrion-targeting transit peptide spans 1–56 (MLHRIPAFIRPRPFSGLPLSCGNREVSVAASVLPAAGSGAVRTENTIQRHFCTSRS). Disordered regions lie at residues 59–83 (SKKD…GEGK) and 203–228 (KSPS…SSLS). Polar residues-rich tracts occupy residues 66-76 (VPANETSQKAA) and 207-217 (MRVSSRPQHQI).

Belongs to the mitochondrion-specific ribosomal protein mS31 family. In terms of assembly, component of the mitochondrial ribosome small subunit (28S) which comprises a 12S rRNA and about 30 distinct proteins.

The protein resides in the mitochondrion. The chain is Small ribosomal subunit protein mS31 (Mrps31) from Rattus norvegicus (Rat).